We begin with the raw amino-acid sequence, 441 residues long: Ribosomal protein uS12 methylthiotransferase RimO (441 aa).

An MTTase N-terminal domain is found at 8–118; that stretch reads PKIGFVSLGC…VLEHVHHYVP (111 aa). [4Fe-4S] cluster contacts are provided by cysteine 17, cysteine 53, cysteine 82, cysteine 150, cysteine 154, and cysteine 157. The 238-residue stretch at 136-373 folds into the Radical SAM core domain; sequence LTPRHYAYLK…MQLQQQISAE (238 aa). Positions 376 to 441 constitute a TRAM domain; the sequence is QEKVGKEILV…DEYDLWGSRV (66 aa).

The protein belongs to the methylthiotransferase family. RimO subfamily. [4Fe-4S] cluster serves as cofactor.

The protein localises to the cytoplasm. It catalyses the reaction L-aspartate(89)-[ribosomal protein uS12]-hydrogen + (sulfur carrier)-SH + AH2 + 2 S-adenosyl-L-methionine = 3-methylsulfanyl-L-aspartate(89)-[ribosomal protein uS12]-hydrogen + (sulfur carrier)-H + 5'-deoxyadenosine + L-methionine + A + S-adenosyl-L-homocysteine + 2 H(+). Functionally, catalyzes the methylthiolation of an aspartic acid residue of ribosomal protein uS12. In Escherichia fergusonii (strain ATCC 35469 / DSM 13698 / CCUG 18766 / IAM 14443 / JCM 21226 / LMG 7866 / NBRC 102419 / NCTC 12128 / CDC 0568-73), this protein is Ribosomal protein uS12 methylthiotransferase RimO.